Consider the following 829-residue polypeptide: Periplasmic nitrate reductase (829 aa).

Residues 1–30 constitute a signal peptide (tat-type signal); that stretch reads MKMTRRAFVKANAAASAAAVAGITLPASAA. In terms of domain architecture, 4Fe-4S Mo/W bis-MGD-type spans 41–97; that stretch reads ITWDKAPCRFCGTGCSVLVGTQNGKVVATQGDPEAPVNKGLNCIKGYFLSKIMYGQD. [4Fe-4S] cluster-binding residues include cysteine 48, cysteine 51, cysteine 55, and cysteine 83. Residues lysine 85, glutamine 152, asparagine 177, cysteine 181, 214 to 221, 245 to 249, 264 to 266, methionine 374, glutamine 378, asparagine 484, 510 to 511, lysine 533, aspartate 560, and 718 to 727 each bind Mo-bis(molybdopterin guanine dinucleotide); these read WGSNMAEM, STYYH, QSD, SD, and TGRVLEHWHT. A substrate-binding site is contributed by phenylalanine 794. The Mo-bis(molybdopterin guanine dinucleotide) site is built by asparagine 802 and lysine 819.

Belongs to the prokaryotic molybdopterin-containing oxidoreductase family. NasA/NapA/NarB subfamily. Component of the periplasmic nitrate reductase NapAB complex composed of NapA and NapB. [4Fe-4S] cluster is required as a cofactor. Requires Mo-bis(molybdopterin guanine dinucleotide) as cofactor. Post-translationally, predicted to be exported by the Tat system. The position of the signal peptide cleavage has not been experimentally proven.

The protein localises to the periplasm. It carries out the reaction 2 Fe(II)-[cytochrome] + nitrate + 2 H(+) = 2 Fe(III)-[cytochrome] + nitrite + H2O. Catalytic subunit of the periplasmic nitrate reductase complex NapAB. Receives electrons from NapB and catalyzes the reduction of nitrate to nitrite. This chain is Periplasmic nitrate reductase, found in Vibrio parahaemolyticus serotype O3:K6 (strain RIMD 2210633).